The chain runs to 223 residues: ATP-dependent dethiobiotin synthetase BioD (223 aa).

11–16 (DIGKTY) provides a ligand contact to ATP. Residue Thr-15 participates in Mg(2+) binding. The active site involves Lys-36. Thr-40 serves as a coordination point for substrate. ATP-binding positions include Asp-50, 110–113 (EGAG), and 174–175 (NN). Mg(2+) is bound by residues Asp-50 and Glu-110.

This sequence belongs to the dethiobiotin synthetase family. In terms of assembly, homodimer. Requires Mg(2+) as cofactor.

The protein localises to the cytoplasm. The enzyme catalyses (7R,8S)-7,8-diammoniononanoate + CO2 + ATP = (4R,5S)-dethiobiotin + ADP + phosphate + 3 H(+). The protein operates within cofactor biosynthesis; biotin biosynthesis; biotin from 7,8-diaminononanoate: step 1/2. In terms of biological role, catalyzes a mechanistically unusual reaction, the ATP-dependent insertion of CO2 between the N7 and N8 nitrogen atoms of 7,8-diaminopelargonic acid (DAPA, also called 7,8-diammoniononanoate) to form a ureido ring. The polypeptide is ATP-dependent dethiobiotin synthetase BioD (Staphylococcus epidermidis (strain ATCC 35984 / DSM 28319 / BCRC 17069 / CCUG 31568 / BM 3577 / RP62A)).